Here is a 260-residue protein sequence, read N- to C-terminus: Dolichol-phosphate mannosyltransferase subunit 1 (260 aa).

Residues 1-20 are disordered; the sequence is MAAEEASRSSPRFRREPKGR. An N-acetylalanine modification is found at Ala-2. Ser-9 carries the phosphoserine modification. Pro-32, Tyr-34, Glu-36, Ile-63, Asp-65, Asp-118, Ala-119, Asp-120, Arg-147, Arg-234, and Lys-240 together coordinate GDP-alpha-D-mannose. Residue Asp-120 coordinates Mg(2+). Asp-120 contacts Mn(2+).

The protein belongs to the glycosyltransferase 2 family. In terms of assembly, component of the dolichol-phosphate mannose (DPM) synthase complex composed of DPM1, DPM2 and DPM3; within the complex, directly interacts with DPM3. This interaction may stabilize DPM1. Requires Mg(2+) as cofactor. Mn(2+) is required as a cofactor. Ca(2+) serves as cofactor.

The protein resides in the endoplasmic reticulum. It catalyses the reaction a di-trans,poly-cis-dolichyl phosphate + GDP-alpha-D-mannose = a di-trans,poly-cis-dolichyl beta-D-mannosyl phosphate + GDP. It functions in the pathway protein modification; protein glycosylation. In terms of biological role, transfers mannose from GDP-mannose to dolichol monophosphate to form dolichol phosphate mannose (Dol-P-Man) which is the mannosyl donor in pathways leading to N-glycosylation, glycosyl phosphatidylinositol membrane anchoring, and O-mannosylation of proteins; catalytic subunit of the dolichol-phosphate mannose (DPM) synthase complex. The protein is Dolichol-phosphate mannosyltransferase subunit 1 (DPM1) of Bos taurus (Bovine).